The following is a 234-amino-acid chain: Phosphatidylinositol phosphate synthase (234 aa).

Helical transmembrane passes span 28-48 and 54-70; these read LTPD…ALVL and LFPG…FDML. Position 31–34 (31–34) interacts with a CDP-1,2-diacyl-sn-glycerol; it reads DAVT. Mg(2+)-binding residues include Asp68 and Asp71. A CDP-1,2-diacyl-sn-glycerol contacts are provided by Gly72, Arg76, and Thr82. Asp89 and Asp93 together coordinate Mg(2+). The next 4 helical transmembrane spans lie at 91-110, 116-134, 155-173, and 179-197; these read ACDR…WVAF, LLVV…ISYI, RLII…FIAW, and VAMW…QRLY. The Proton acceptor role is filled by Asp93. The tract at residues 211 to 234 is disordered; sequence PSAPVRDDDAQGHPRSGDPGKTQR. The segment covering 215 to 228 has biased composition (basic and acidic residues); the sequence is VRDDDAQGHPRSGD.

The protein belongs to the CDP-alcohol phosphatidyltransferase class-I family. In terms of assembly, homodimer. The cofactor is Mg(2+).

It localises to the cell membrane. The catalysed reaction is a CDP-1,2-diacyl-sn-glycerol + 1D-myo-inositol 3-phosphate = a 1,2-diacyl-sn-glycero-3-phospho-(1D-myo-inositol-3-phosphate) + CMP + H(+). It catalyses the reaction 1,2-di-(9Z-octadecenoyl)-sn-glycero-3-cytidine-5'-diphosphate + 1D-myo-inositol 3-phosphate = 1,2-di-(9Z-octadecenoyl)-sn-glycero-3-phospho-(1D-myo-inositol-3-phosphate) + CMP + H(+). It participates in phospholipid metabolism; phosphatidylinositol phosphate biosynthesis. In terms of biological role, catalyzes the conjugation of the 1'-hydroxyl group of D-myo-inositol-3-phosphate (also named L-myo-inositol-1-phosphate) with a lipid tail of cytidine diphosphate diacylglycerol (CDP-DAG), forming phosphatidylinositol phosphate (PIP) and CMP. PIP is a precursor of phosphatidylinositol (PI) which is an essential lipid for mycobacteria required for formation of their cell wall. The sequence is that of Phosphatidylinositol phosphate synthase from Mycobacterium marinum (strain ATCC BAA-535 / M).